Consider the following 185-residue polypeptide: dTDP-4-dehydrorhamnose 3,5-epimerase (185 aa).

Residues Arg-23, Glu-28, 47–49 (QDN), and Arg-59 contribute to the substrate site. The active-site Proton acceptor is His-62. Residues Lys-72 and His-119 each coordinate substrate. The Proton donor role is filled by Tyr-132. Residues Asp-143 and Lys-168 each coordinate substrate.

The protein belongs to the dTDP-4-dehydrorhamnose 3,5-epimerase family. Homodimer.

It carries out the reaction dTDP-4-dehydro-6-deoxy-alpha-D-glucose = dTDP-4-dehydro-beta-L-rhamnose. It functions in the pathway carbohydrate biosynthesis; dTDP-L-rhamnose biosynthesis. It participates in bacterial outer membrane biogenesis; LPS O-antigen biosynthesis. In terms of biological role, catalyzes the epimerization of the C3' and C5'positions of dTDP-6-deoxy-D-xylo-4-hexulose, forming dTDP-6-deoxy-L-lyxo-4-hexulose. In Escherichia coli (strain K12), this protein is dTDP-4-dehydrorhamnose 3,5-epimerase (rfbC).